A 409-amino-acid polypeptide reads, in one-letter code: Peptidase T (409 aa).

His80 is a Zn(2+) binding site. Asp82 is a catalytic residue. Asp143 provides a ligand contact to Zn(2+). Glu177 functions as the Proton acceptor in the catalytic mechanism. The Zn(2+) site is built by Glu178, Asp200, and His382.

This sequence belongs to the peptidase M20B family. The cofactor is Zn(2+).

The protein resides in the cytoplasm. It carries out the reaction Release of the N-terminal residue from a tripeptide.. Cleaves the N-terminal amino acid of tripeptides. In Alkaliphilus oremlandii (strain OhILAs) (Clostridium oremlandii (strain OhILAs)), this protein is Peptidase T.